Reading from the N-terminus, the 269-residue chain is 5'-nucleotidase SurE (269 aa).

A divalent metal cation contacts are provided by Asp-11, Asp-12, Ser-42, and Asn-90.

Belongs to the SurE nucleotidase family. The cofactor is a divalent metal cation.

The protein resides in the cytoplasm. The enzyme catalyses a ribonucleoside 5'-phosphate + H2O = a ribonucleoside + phosphate. Functionally, nucleotidase that shows phosphatase activity on nucleoside 5'-monophosphates. This is 5'-nucleotidase SurE from Haloarcula marismortui (strain ATCC 43049 / DSM 3752 / JCM 8966 / VKM B-1809) (Halobacterium marismortui).